Consider the following 83-residue polypeptide: ATP synthase subunit c (83 aa).

Helical transmembrane passes span 10–30 (IAVA…FGLL) and 52–72 (MFIV…IALY).

It belongs to the ATPase C chain family. In terms of assembly, F-type ATPases have 2 components, F(1) - the catalytic core - and F(0) - the membrane proton channel. F(1) has five subunits: alpha(3), beta(3), gamma(1), delta(1), epsilon(1). F(0) has three main subunits: a(1), b(2) and c(10-14). The alpha and beta chains form an alternating ring which encloses part of the gamma chain. F(1) is attached to F(0) by a central stalk formed by the gamma and epsilon chains, while a peripheral stalk is formed by the delta and b chains.

Its subcellular location is the cell inner membrane. Functionally, f(1)F(0) ATP synthase produces ATP from ADP in the presence of a proton or sodium gradient. F-type ATPases consist of two structural domains, F(1) containing the extramembraneous catalytic core and F(0) containing the membrane proton channel, linked together by a central stalk and a peripheral stalk. During catalysis, ATP synthesis in the catalytic domain of F(1) is coupled via a rotary mechanism of the central stalk subunits to proton translocation. Key component of the F(0) channel; it plays a direct role in translocation across the membrane. A homomeric c-ring of between 10-14 subunits forms the central stalk rotor element with the F(1) delta and epsilon subunits. This Shewanella amazonensis (strain ATCC BAA-1098 / SB2B) protein is ATP synthase subunit c.